The primary structure comprises 128 residues: DNA polymerase epsilon subunit 3 (128 aa).

The segment covering 98-110 has biased composition (basic and acidic residues); it reads EKKESKASKKDSN. The disordered stretch occupies residues 98–128; it reads EKKESKASKKDSNTAENANASATATAEEAPE. Low complexity predominate over residues 111–128; sequence TAENANASATATAEEAPE.

In terms of assembly, homodimer. Component of the DNA polymerase epsilon complex consisting of four subunits: the catalytic subunit PolE1/DNApol-epsilon255 and the accessory subunits PolE2/DNApol-epsilon58, Chrac-14/DNApolE3 and PolE4. Component of the chromatin accessibility complex (CHRAC), composed of Chrac-14, Chrac-16, Acf and Iswi. Forms an heterodimer with Chrac-16. The Chrac-14/Chrac-16 heterodimer interacts with Acf (via N-terminus). Interacts directly with Iswi and this interaction is further stabilized by association with Chrac-16. Component of the Ada2a-containing (ATAC) complex composed of at least Ada2a, Atac1, Hcf, Ada3, Gcn5, Mocs2B, Charac-14, Atac3, Atac2, NC2beta and wds. Interacts with cid.

The protein resides in the nucleus. Accessory component of the DNA polymerase epsilon complex. Participates in DNA repair and in chromosomal DNA replication. Histone-like protein which promotes nucleosome sliding of ATP-dependent nucleosome remodeling complexes. Part of the chromatin-accessibility complex (CHRAC) which uses energy/ATP to increase the general accessibility of DNA in chromatin. As a heterodimer with Chrac-16, binds DNA and facilitates nucleosome sliding by Acf. Has a role in DNA damage response by preventing cid mislocalization to chromatin. The protein is DNA polymerase epsilon subunit 3 of Drosophila melanogaster (Fruit fly).